The sequence spans 202 residues: Holliday junction branch migration complex subunit RuvA (202 aa).

The domain I stretch occupies residues 1–64 (MFAYIRGRLE…EDVISLYGFL (64 aa)). Positions 65-143 (TQEELNVFEL…KEQLTEYAQS (79 aa)) are domain II. Residues 144 to 152 (EEGGKVLDT) form a flexible linker region. A domain III region spans residues 152–202 (TDSSKMAEAVSALMVLGYSPAEANKAVSAVYREDMDIETIIKNALKGLARP).

This sequence belongs to the RuvA family. Homotetramer. Forms an RuvA(8)-RuvB(12)-Holliday junction (HJ) complex. HJ DNA is sandwiched between 2 RuvA tetramers; dsDNA enters through RuvA and exits via RuvB. An RuvB hexamer assembles on each DNA strand where it exits the tetramer. Each RuvB hexamer is contacted by two RuvA subunits (via domain III) on 2 adjacent RuvB subunits; this complex drives branch migration. In the full resolvosome a probable DNA-RuvA(4)-RuvB(12)-RuvC(2) complex forms which resolves the HJ.

The protein localises to the cytoplasm. Its function is as follows. The RuvA-RuvB-RuvC complex processes Holliday junction (HJ) DNA during genetic recombination and DNA repair, while the RuvA-RuvB complex plays an important role in the rescue of blocked DNA replication forks via replication fork reversal (RFR). RuvA specifically binds to HJ cruciform DNA, conferring on it an open structure. The RuvB hexamer acts as an ATP-dependent pump, pulling dsDNA into and through the RuvAB complex. HJ branch migration allows RuvC to scan DNA until it finds its consensus sequence, where it cleaves and resolves the cruciform DNA. The sequence is that of Holliday junction branch migration complex subunit RuvA from Acetivibrio thermocellus (strain ATCC 27405 / DSM 1237 / JCM 9322 / NBRC 103400 / NCIMB 10682 / NRRL B-4536 / VPI 7372) (Clostridium thermocellum).